The following is a 347-amino-acid chain: NADH-quinone oxidoreductase subunit H (347 aa).

9 helical membrane-spanning segments follow: residues 13-33, 50-70, 82-102, 115-135, 161-181, 198-218, 248-268, 286-306, and 325-345; these read LIIA…VAYL, PNVV…KFVF, GVFL…WAVI, VGIL…IMGG, IGFV…TDIV, FLDW…ISAL, FLLF…LMTV, VPGI…FAMV, and VFLP…KVFG.

The protein belongs to the complex I subunit 1 family. As to quaternary structure, NDH-1 is composed of 14 different subunits. Subunits NuoA, H, J, K, L, M, N constitute the membrane sector of the complex.

It localises to the cell inner membrane. It carries out the reaction a quinone + NADH + 5 H(+)(in) = a quinol + NAD(+) + 4 H(+)(out). In terms of biological role, NDH-1 shuttles electrons from NADH, via FMN and iron-sulfur (Fe-S) centers, to quinones in the respiratory chain. The immediate electron acceptor for the enzyme in this species is believed to be ubiquinone. Couples the redox reaction to proton translocation (for every two electrons transferred, four hydrogen ions are translocated across the cytoplasmic membrane), and thus conserves the redox energy in a proton gradient. This subunit may bind ubiquinone. The sequence is that of NADH-quinone oxidoreductase subunit H from Brucella ovis (strain ATCC 25840 / 63/290 / NCTC 10512).